A 198-amino-acid chain; its full sequence is Type II secretion system protein J (198 aa).

Residues 1–7 (MIRRSSG) constitute a propeptide, leader sequence. At Phe-8 the chain carries N-methylphenylalanine. The helical transmembrane segment at 8-28 (FTLVEMLLALAILAALSVAAV) threads the bilayer.

It belongs to the GSP J family. Type II secretion is composed of four main components: the outer membrane complex, the inner membrane complex, the cytoplasmic secretion ATPase and the periplasm-spanning pseudopilus. Interacts with core component PulG. Post-translationally, cleaved by prepilin peptidase. In terms of processing, methylated by prepilin peptidase at the amino group of the N-terminal phenylalanine once the leader sequence is cleaved by prepilin peptidase.

The protein localises to the cell inner membrane. Component of the type II secretion system required for the energy-dependent secretion of extracellular factors such as proteases and toxins from the periplasm. Part of the pseudopilus tip complex that is critical for the recognition and binding of secretion substrates. This Klebsiella pneumoniae protein is Type II secretion system protein J (pulJ).